We begin with the raw amino-acid sequence, 293 residues long: MDKQNVQMNPPHPGTNLTGPPGHIGYPGPQAGYAVPPPGYASPGPVGFPVQHQPVTGHPGAPTQVPWMPAPLPPLNCPPGLEYLTQIDQLLIHQQIELLEVLIGFETNNKYEIKNSLGQRIYFAAEDTDCCTRNCCGPSRPFTMRILDNMGREVITLERPLRCTSCCFPCCLQEIEIQAPPGVPVGYVTQTWHPCLPKFTIQNERREDVLRISGPCVICSCCADIDFEVKSLDDKYVVGKISKHWTGLIKELFTDVDNFGIQFPLDLDVKMKAVMLGACFLIDFMFFEMTRGE.

Positions 1–39 (MDKQNVQMNPPHPGTNLTGPPGHIGYPGPQAGYAVPPPG) are disordered. The proline-rich domain (PRD) stretch occupies residues 1-66 (MDKQNVQMNP…GHPGAPTQVP (66 aa)). The Cytoplasmic portion of the chain corresponds to 1–270 (MDKQNVQMNP…IQFPLDLDVK (270 aa)). Position 143 is a phosphothreonine; by PKC (T143). S-palmitoyl cysteine attachment occurs at residues C166, C167, C170, and C171. Residues 271-287 (MKAVMLGACFLIDFMFF) traverse the membrane as a helical segment. The Extracellular segment spans residues 288-293 (EMTRGE).

It belongs to the phospholipid scramblase family. Requires Ca(2+) as cofactor.

It localises to the membrane. The catalysed reaction is a 1,2-diacyl-sn-glycero-3-phosphocholine(in) = a 1,2-diacyl-sn-glycero-3-phosphocholine(out). May catalyze calcium-induced ATP-independent rapid bidirectional and non-specific movement of phospholipids (lipid scrambling or lipid flip-flop) between the inner and outer leaflet of the plasma membrane. This is Phospholipid scramblase 2 from Bos taurus (Bovine).